The chain runs to 183 residues: TATA-box-binding protein 2 (183 aa).

2 tandem repeats follow at residues 8-84 (IENV…AKKL) and 99-177 (VQNI…RQQL).

It belongs to the TBP family.

Functionally, general factor that plays a role in the activation of archaeal genes transcribed by RNA polymerase. Binds specifically to the TATA box promoter element which lies close to the position of transcription initiation. The polypeptide is TATA-box-binding protein 2 (Methanosarcina mazei (strain ATCC BAA-159 / DSM 3647 / Goe1 / Go1 / JCM 11833 / OCM 88) (Methanosarcina frisia)).